Reading from the N-terminus, the 73-residue chain is Potassium channel toxin alpha-KTx 27.1 (73 aa).

The signal sequence occupies residues 1–23; it reads MKFLFLTLFVCCFIAVLVIPSEA.

This sequence belongs to the short scorpion toxin superfamily. Potassium channel inhibitor family. Alpha-KTx 27 subfamily. Post-translationally, contains 4 disulfide bonds. In terms of tissue distribution, expressed by the venom gland.

The protein localises to the secreted. This chain is Potassium channel toxin alpha-KTx 27.1, found in Buthus israelis (Israeli scorpion).